We begin with the raw amino-acid sequence, 890 residues long: Translation initiation factor IF-2 (890 aa).

The disordered stretch occupies residues 45–304 (LIDHLNQKNS…LQQGFQKPAQ (260 aa)). Residues 67 to 81 (STLNIPGTGGKSKSV) show a composition bias toward polar residues. Residues 92-217 (VKRDPQEAER…RMAEENKWTD (126 aa)) show a composition bias toward basic and acidic residues. The span at 252–266 (GRGRNAKAARPKKGN) shows a compositional bias: basic residues. Over residues 267-280 (KHAESKADREEARA) the composition is skewed to basic and acidic residues. Residues 389–558 (PRAPVVTIMG…LLQAEVLELK (170 aa)) enclose the tr-type G domain. Residues 398 to 405 (GHVDHGKT) form a G1 region. Residue 398–405 (GHVDHGKT) coordinates GTP. The interval 423-427 (GITQH) is G2. The segment at 444–447 (DTPG) is G3. Residues 444–448 (DTPGH) and 498–501 (NKID) each bind GTP. The tract at residues 498-501 (NKID) is G4. The interval 534 to 536 (SAK) is G5. Position 808 is an N6-acetyllysine (K808).

It belongs to the TRAFAC class translation factor GTPase superfamily. Classic translation factor GTPase family. IF-2 subfamily.

The protein resides in the cytoplasm. In terms of biological role, one of the essential components for the initiation of protein synthesis. Protects formylmethionyl-tRNA from spontaneous hydrolysis and promotes its binding to the 30S ribosomal subunits. Also involved in the hydrolysis of GTP during the formation of the 70S ribosomal complex. The polypeptide is Translation initiation factor IF-2 (Escherichia coli O127:H6 (strain E2348/69 / EPEC)).